Here is a 110-residue protein sequence, read N- to C-terminus: Coiled-coil-helix-coiled-coil-helix domain-containing protein 5 (110 aa).

Position 1 is an N-acetylmethionine (Met1). CHCH domains are found at residues 9–52 and 55–97; these read ARYC…PIIR and RQAC…QPPS. 4 consecutive short sequence motifs (cx9C motif) follow at residues 12–22, 34–44, 58–68, and 79–89; these read CSRELDQYGQC, CHHLKMSIARC, CAEPFEAFEKC, and CAEHMRRFLQC. 4 disulfides stabilise this stretch: Cys12-Cys44, Cys22-Cys34, Cys58-Cys89, and Cys68-Cys79.

In terms of assembly, monomer.

Its subcellular location is the mitochondrion intermembrane space. This chain is Coiled-coil-helix-coiled-coil-helix domain-containing protein 5 (Chchd5), found in Mus musculus (Mouse).